The following is a 200-amino-acid chain: Dephospho-CoA kinase (200 aa).

In terms of domain architecture, DPCK spans 4–200 (VIGLTGGIGS…QKYIKMSHLY (197 aa)). ATP is bound at residue 12-17 (GSGKTT).

The protein belongs to the CoaE family.

It localises to the cytoplasm. The catalysed reaction is 3'-dephospho-CoA + ATP = ADP + CoA + H(+). Its pathway is cofactor biosynthesis; coenzyme A biosynthesis; CoA from (R)-pantothenate: step 5/5. In terms of biological role, catalyzes the phosphorylation of the 3'-hydroxyl group of dephosphocoenzyme A to form coenzyme A. The sequence is that of Dephospho-CoA kinase from Photobacterium profundum (strain SS9).